The following is a 388-amino-acid chain: Ribosomal RNA large subunit methyltransferase F (388 aa).

Polar residues predominate over residues 1–22; it reads MKTNNHNAKQAQTKTAKSNPSK. Positions 1–51 are disordered; that stretch reads MKTNNHNAKQAQTKTAKSNPSKEVTKIKPKRVKNKPTAKAAKSTGLKTNAA. Residues 27 to 36 are compositionally biased toward basic residues; that stretch reads IKPKRVKNKP.

This sequence belongs to the methyltransferase superfamily. METTL16/RlmF family.

The protein resides in the cytoplasm. The catalysed reaction is adenosine(1618) in 23S rRNA + S-adenosyl-L-methionine = N(6)-methyladenosine(1618) in 23S rRNA + S-adenosyl-L-homocysteine + H(+). Specifically methylates the adenine in position 1618 of 23S rRNA. In Vibrio campbellii (strain ATCC BAA-1116), this protein is Ribosomal RNA large subunit methyltransferase F.